The primary structure comprises 187 residues: Protein GrpE (187 aa).

Residues 1-22 (MADEQNLDAQAQDQAAEAGAGD) are disordered. Low complexity predominate over residues 7–22 (LDAQAQDQAAEAGAGD).

It belongs to the GrpE family. Homodimer.

The protein localises to the cytoplasm. In terms of biological role, participates actively in the response to hyperosmotic and heat shock by preventing the aggregation of stress-denatured proteins, in association with DnaK and GrpE. It is the nucleotide exchange factor for DnaK and may function as a thermosensor. Unfolded proteins bind initially to DnaJ; upon interaction with the DnaJ-bound protein, DnaK hydrolyzes its bound ATP, resulting in the formation of a stable complex. GrpE releases ADP from DnaK; ATP binding to DnaK triggers the release of the substrate protein, thus completing the reaction cycle. Several rounds of ATP-dependent interactions between DnaJ, DnaK and GrpE are required for fully efficient folding. The protein is Protein GrpE of Pseudomonas syringae pv. tomato (strain ATCC BAA-871 / DC3000).